A 303-amino-acid chain; its full sequence is Coenzyme PQQ synthesis protein B (303 aa).

The protein belongs to the PqqB family.

The protein operates within cofactor biosynthesis; pyrroloquinoline quinone biosynthesis. Functionally, may be involved in the transport of PQQ or its precursor to the periplasm. The protein is Coenzyme PQQ synthesis protein B of Acinetobacter baumannii (strain ACICU).